The chain runs to 116 residues: Endoribonuclease EndoA (116 aa).

This sequence belongs to the PemK/MazF family. In terms of assembly, homodimer. Forms a complex with antitoxin EndoAI in which the toxin activity is inhibited. One dimer binds a ssRNA substrate, forms a heterohexamer composed of alternating toxin and antitoxin homodimers which inhibits the endoribonuclease activity. Antitoxin prevents RNA binding to the endoribonuclease.

Its function is as follows. Toxic component of a type II toxin-antitoxin (TA) system. Specific for 5'-UACAU-3' sequences, cleaving after the first U. Yields cleavage products with 3' phosphate and 5' hydroxyl groups. Cannot digest substrate with a UUdUACAUAA cleavage site. Overexpression is toxic for cell growth (shown in E.coli), probably by inhibiting protein synthesis through the cleavage of single-stranded RNA. The toxicity is reversed by the antitoxin EndoAI. Toxin activity cannot be inhibited by MazE from E.coli. The EndoA-EndoAI complex does not seem to bind its own promoter. The sequence is that of Endoribonuclease EndoA from Bacillus subtilis (strain 168).